We begin with the raw amino-acid sequence, 170 residues long: Cathelicidin antimicrobial peptide (170 aa).

The first 30 residues, 1 to 30 (MKTQRDGHSLGRWSLVLLLLGLVMPLAIIA), serve as a signal peptide directing secretion. Residues 31-131 (QVLSYKEAVL…DISCDKDNKR (101 aa)) constitute a propeptide, cathelin-like domain (CLD). 2 disulfide bridges follow: cysteine 86–cysteine 97 and cysteine 108–cysteine 125. Residues 150 to 162 (FKRIVQRIKDFLR) are active core.

It belongs to the cathelicidin family. In terms of assembly, monomer, homodimer or homotrimer (in vitro). Oligomerizes as tetra- or hexamer in solution (in vitro). The N-terminus is blocked. Post-translationally, proteolytically cleaved by proteinase PRTN3 into antibacterial peptide LL-37. Proteolytically cleaved by cathepsin CTSG and neutrophil elastase ELANE. In terms of processing, resistant to proteolytic degradation in solution, and when bound to both zwitterionic (mimicking mammalian membranes) and negatively charged membranes (mimicking bacterial membranes). After secretion onto the skin surface, the CAMP gene product is processed by a serine protease-dependent mechanism into multiple novel antimicrobial peptides distinct from and shorter than cathelicidin LL-37, such as peptides KR-20 (residues 151-170), LL-23 (residues 134-156), LL-29 (residues 134-162), KS-30 (residues 141-170), RK-31 (residues 140-170) and FF-33 (residues 138-170). The peptides act synergistically, killing bacteria at lower concentrations when present together, and maintain activity at increased salt condition. Expressed in neutrophilic granulocytes (at protein level). Expressed in bone marrow. In terms of tissue distribution, expressed in granulocytes (at protein level). Expressed by the eccrine apparatus and secreted into sweat on skin (at protein level). As to expression, expressed in bone marrow and testis.

It localises to the secreted. The protein resides in the vesicle. Antimicrobial protein that is an integral component of the innate immune system. Binds to bacterial lipopolysaccharides (LPS). Acts via neutrophil N-formyl peptide receptors to enhance the release of CXCL2. Postsecretory processing generates multiple cathelicidin antimicrobial peptides with various lengths which act as a topical antimicrobial defense in sweat on skin. The unprocessed precursor form, cathelicidin antimicrobial peptide, inhibits the growth of Gram-negative E.coli and E.aerogenes with efficiencies comparable to that of the mature peptide LL-37 (in vitro). Its function is as follows. Antimicrobial peptide that is an integral component of the innate immune system. Binds to bacterial lipopolysaccharides (LPS). Causes membrane permeabilization by forming transmembrane pores (in vitro). Causes lysis of E.coli. Exhibits antimicrobial activity against Gram-negative bacteria such as P.aeruginosa, S.typhimurium, E.aerogenes, E.coli and P.syringae, Gram-positive bacteria such as L.monocytogenes, S.epidermidis, S.pyogenes and S.aureus, as well as vancomycin-resistant enterococci (in vitro). Exhibits antimicrobial activity against methicillin-resistant S.aureus, P.mirabilis, and C.albicans in low-salt media, but not in media containing 100 mM NaCl (in vitro). Forms chiral supramolecular assemblies with quinolone signal (PQS) molecules of P.aeruginosa, which may lead to interference of bacterial quorum signaling and perturbance of bacterial biofilm formation. May form supramolecular fiber-like assemblies on bacterial membranes. Induces cytokine and chemokine production as well as TNF/TNFA and CSF2/GMCSF production in normal human keratinocytes. Exhibits hemolytic activity against red blood cells. In terms of biological role, exhibits antimicrobial activity against E.coli and B.megaterium (in vitro). Functionally, acts synergistically with peptides KS-30 and KR-31, killing bacteria such as S.aureus, E.coli and C.albicans at lower concentrations when present together, and maintains activity at increased salt condition. Does not have the ability to stimulate CXCL8/IL8 release from keratinocytes. Poorly active (MIC &gt; 150 uM) against E.coli strain K12. Is able to induce the pro-inflammatory cytokine TNF/TNFA or the chemokine CCL2/MCP1. Its function is as follows. Moderately antibacterial. In terms of biological role, moderately antibacterial. Acts synergistically with peptides KR-20 and KR-31, killing bacteria such as S.aureus, E.coli and C.albicans at lower concentrations when present together, and maintain activity at increased salt condition. Does not have the ability to stimulate CXCL8/IL8 release from keratinocytes. Functionally, acts synergistically with peptides KS-30 and KR-31, killing bacteria such as S.aureus, E.coli and C.albicans at lower concentrations when present together, and maintain activity at increased salt condition. Does not have the ability to stimulate CXCL8/IL8 release from keratinocytes. Inhibits the growth of E.coli and B.megaterium and exhibits hemolytic activity against human red blood cells. The polypeptide is Cathelicidin antimicrobial peptide (Homo sapiens (Human)).